Reading from the N-terminus, the 249-residue chain is Triosephosphate isomerase (249 aa).

Substrate contacts are provided by Asn12 and Lys14. Lys14 bears the N6-acetyllysine mark. 3'-nitrotyrosine is present on Tyr68. Residue Ser80 is modified to Phosphoserine. His96 acts as the Electrophile in catalysis. Residue Ser106 is modified to Phosphoserine. Residue Lys142 forms a Glycyl lysine isopeptide (Lys-Gly) (interchain with G-Cter in SUMO1) linkage. Lys149 bears the N6-succinyllysine mark. Lys156 carries the post-translational modification N6-acetyllysine; alternate. Lys156 carries the N6-succinyllysine; alternate modification. At Ser159 the chain carries Phosphoserine. Glu166 (proton acceptor) is an active-site residue. Thr173 bears the Phosphothreonine mark. Position 194 is an N6-acetyllysine; alternate (Lys194). Lys194 is subject to N6-succinyllysine; alternate. Lys194 carries the post-translational modification N6-methyllysine; alternate. Residue Ser198 is modified to Phosphoserine. Residue Tyr209 is modified to 3'-nitrotyrosine. Ser212 carries the post-translational modification Phosphoserine. Residue Thr214 is modified to Phosphothreonine. Phosphoserine is present on Ser223. An N6-acetyllysine modification is found at Lys238.

It belongs to the triosephosphate isomerase family. As to quaternary structure, homodimer.

It is found in the cytoplasm. It carries out the reaction dihydroxyacetone phosphate = methylglyoxal + phosphate. The catalysed reaction is D-glyceraldehyde 3-phosphate = dihydroxyacetone phosphate. The protein operates within carbohydrate degradation; glycolysis; D-glyceraldehyde 3-phosphate from glycerone phosphate: step 1/1. It functions in the pathway carbohydrate biosynthesis; gluconeogenesis. Functionally, triosephosphate isomerase is an extremely efficient metabolic enzyme that catalyzes the interconversion between dihydroxyacetone phosphate (DHAP) and D-glyceraldehyde-3-phosphate (G3P) in glycolysis and gluconeogenesis. In terms of biological role, it is also responsible for the non-negligible production of methylglyoxal a reactive cytotoxic side-product that modifies and can alter proteins, DNA and lipids. The chain is Triosephosphate isomerase (TPI1) from Gorilla gorilla gorilla (Western lowland gorilla).